Consider the following 121-residue polypeptide: MRIMLLFTAILAFSLAQSFGAVCKEPQEEVVPGGGRSKRDPDLYQLLQRLFKSHSSLEGLLKALSQASTDPKESTSPEKRDMHDFFVGLMGKRSVQPDSPTDVNQENVPSFGILKYPPRAE.

The N-terminal stretch at 1-16 is a signal peptide; the sequence is MRIMLLFTAILAFSLA. Residues 17–78 constitute a propeptide that is removed on maturation; that stretch reads QSFGAVCKEP…TDPKESTSPE (62 aa). Position 90 is a methionine amide (Met90). A disordered region spans residues 93–121; the sequence is RSVQPDSPTDVNQENVPSFGILKYPPRAE. Residues 94–121 constitute a propeptide that is removed on maturation; the sequence is SVQPDSPTDVNQENVPSFGILKYPPRAE. Positions 96-108 are enriched in polar residues; that stretch reads QPDSPTDVNQENV.

The protein belongs to the tachykinin family.

The protein resides in the secreted. Functionally, tachykinins are active peptides which excite neurons, evoke behavioral responses, are potent vasodilators and secretagogues, and contract (directly or indirectly) many smooth muscles. Is a critical central regulator of gonadal function. This is Tachykinin-3 (TAC3) from Homo sapiens (Human).